A 157-amino-acid chain; its full sequence is 3-hydroxybutyryl-CoA dehydratase (157 aa).

The MaoC-like domain maps to 22–120 (KKEISSSDVV…IPERRRARLA (99 aa)).

The catalysed reaction is (3R)-3-hydroxybutanoyl-CoA = (2E)-butenoyl-CoA + H2O. Involved in the regeneration of glyoxylate from a molecule of acetyl-CoA. This is 3-hydroxybutyryl-CoA dehydratase from Methylorubrum extorquens (strain ATCC 14718 / DSM 1338 / JCM 2805 / NCIMB 9133 / AM1) (Methylobacterium extorquens).